A 186-amino-acid chain; its full sequence is Peptide deformylase (186 aa).

Fe cation-binding residues include C94 and H136. The active site involves E137. H140 is a binding site for Fe cation.

This sequence belongs to the polypeptide deformylase family. It depends on Fe(2+) as a cofactor.

The catalysed reaction is N-terminal N-formyl-L-methionyl-[peptide] + H2O = N-terminal L-methionyl-[peptide] + formate. Its function is as follows. Removes the formyl group from the N-terminal Met of newly synthesized proteins. Requires at least a dipeptide for an efficient rate of reaction. N-terminal L-methionine is a prerequisite for activity but the enzyme has broad specificity at other positions. The polypeptide is Peptide deformylase (Prosthecochloris aestuarii (strain DSM 271 / SK 413)).